The sequence spans 311 residues: Bifunctional protein FolD (311 aa).

174-176 (GKG) contributes to the NADP(+) binding site.

The protein belongs to the tetrahydrofolate dehydrogenase/cyclohydrolase family. Homodimer.

It carries out the reaction (6R)-5,10-methylene-5,6,7,8-tetrahydrofolate + NADP(+) = (6R)-5,10-methenyltetrahydrofolate + NADPH. The enzyme catalyses (6R)-5,10-methenyltetrahydrofolate + H2O = (6R)-10-formyltetrahydrofolate + H(+). It participates in one-carbon metabolism; tetrahydrofolate interconversion. Its function is as follows. Catalyzes the oxidation of 5,10-methylenetetrahydrofolate to 5,10-methenyltetrahydrofolate and then the hydrolysis of 5,10-methenyltetrahydrofolate to 10-formyltetrahydrofolate. The protein is Bifunctional protein FolD of Pyrobaculum neutrophilum (strain DSM 2338 / JCM 9278 / NBRC 100436 / V24Sta) (Thermoproteus neutrophilus).